A 429-amino-acid chain; its full sequence is Phosphoribosylamine--glycine ligase (429 aa).

One can recognise an ATP-grasp domain in the interval 109 to 316 (KDFLARHNIP…LVELCQAAIA (208 aa)). 135–196 (VREKGAPIVV…EEFLDGEEAS (62 aa)) provides a ligand contact to ATP. Residues Glu-286 and Asn-288 each contribute to the Mg(2+) site.

This sequence belongs to the GARS family. Requires Mg(2+) as cofactor. Mn(2+) is required as a cofactor.

It catalyses the reaction 5-phospho-beta-D-ribosylamine + glycine + ATP = N(1)-(5-phospho-beta-D-ribosyl)glycinamide + ADP + phosphate + H(+). Its pathway is purine metabolism; IMP biosynthesis via de novo pathway; N(1)-(5-phospho-D-ribosyl)glycinamide from 5-phospho-alpha-D-ribose 1-diphosphate: step 2/2. The protein is Phosphoribosylamine--glycine ligase of Vibrio cholerae serotype O1 (strain ATCC 39315 / El Tor Inaba N16961).